The primary structure comprises 422 residues: Serine--tRNA ligase (422 aa).

231-233 lines the L-serine pocket; that stretch reads TSE. An ATP-binding site is contributed by 262–264; sequence RQE. Glutamate 285 serves as a coordination point for L-serine. 349–352 contributes to the ATP binding site; it reads EISS. Serine 384 serves as a coordination point for L-serine.

It belongs to the class-II aminoacyl-tRNA synthetase family. Type-1 seryl-tRNA synthetase subfamily. Homodimer. The tRNA molecule binds across the dimer.

It localises to the cytoplasm. The catalysed reaction is tRNA(Ser) + L-serine + ATP = L-seryl-tRNA(Ser) + AMP + diphosphate + H(+). The enzyme catalyses tRNA(Sec) + L-serine + ATP = L-seryl-tRNA(Sec) + AMP + diphosphate + H(+). Its pathway is aminoacyl-tRNA biosynthesis; selenocysteinyl-tRNA(Sec) biosynthesis; L-seryl-tRNA(Sec) from L-serine and tRNA(Sec): step 1/1. Functionally, catalyzes the attachment of serine to tRNA(Ser). Is also able to aminoacylate tRNA(Sec) with serine, to form the misacylated tRNA L-seryl-tRNA(Sec), which will be further converted into selenocysteinyl-tRNA(Sec). This is Serine--tRNA ligase from Mycoplasma mycoides subsp. mycoides SC (strain CCUG 32753 / NCTC 10114 / PG1).